Consider the following 247-residue polypeptide: Carboxy-S-adenosyl-L-methionine synthase (247 aa).

Residues Tyr-40, 65-67 (GAS), 90-91 (DN), 122-123 (DI), Asn-137, and Arg-204 contribute to the S-adenosyl-L-methionine site.

The protein belongs to the class I-like SAM-binding methyltransferase superfamily. Cx-SAM synthase family. As to quaternary structure, homodimer.

It catalyses the reaction prephenate + S-adenosyl-L-methionine = carboxy-S-adenosyl-L-methionine + 3-phenylpyruvate + H2O. Its function is as follows. Catalyzes the conversion of S-adenosyl-L-methionine (SAM) to carboxy-S-adenosyl-L-methionine (Cx-SAM). This is Carboxy-S-adenosyl-L-methionine synthase from Ectopseudomonas mendocina (strain ymp) (Pseudomonas mendocina).